Here is a 296-residue protein sequence, read N- to C-terminus: ATP phosphoribosyltransferase (296 aa).

The protein belongs to the ATP phosphoribosyltransferase family.

It is found in the cytoplasm. It carries out the reaction 1-(5-phospho-beta-D-ribosyl)-ATP + diphosphate = 5-phospho-alpha-D-ribose 1-diphosphate + ATP. It participates in amino-acid biosynthesis; L-histidine biosynthesis; L-histidine from 5-phospho-alpha-D-ribose 1-diphosphate: step 1/9. Functionally, catalyzes the condensation of ATP and 5-phosphoribose 1-diphosphate to form N'-(5'-phosphoribosyl)-ATP (PR-ATP). Has a crucial role in the pathway because the rate of histidine biosynthesis seems to be controlled primarily by regulation of the enzymatic activity. The chain is ATP phosphoribosyltransferase (HIS1) from Yarrowia lipolytica (strain CLIB 122 / E 150) (Yeast).